We begin with the raw amino-acid sequence, 937 residues long: Beta-mannosidase A (937 aa).

The N-terminal stretch at 1–23 (MRALPTTATTLLGVLFFPSASRS) is a signal peptide. N-linked (GlcNAc...) asparagine glycans are attached at residues N42, N82, N250, N285, N319, N329, and N350. The Proton donor role is filled by E482. 4 N-linked (GlcNAc...) asparagine glycosylation sites follow: N553, N612, N743, and N796.

It belongs to the glycosyl hydrolase 2 family. Beta-mannosidase A subfamily. In terms of assembly, homodimer. N-glycosylated.

The protein localises to the secreted. The catalysed reaction is Hydrolysis of terminal, non-reducing beta-D-mannose residues in beta-D-mannosides.. The protein operates within glycan metabolism; N-glycan degradation. In terms of biological role, exoglycosidase that cleaves the single beta-linked mannose residue from the non-reducing end of beta-mannosidic oligosaccharides of various complexity and length. Involved in the degradation of polymeric mannan and galactomannan. Releases the terminal mannose residue from mannotriose and is somewaht less active on other mannooligosaccharides. In Aspergillus aculeatus, this protein is Beta-mannosidase A (mndA).